The sequence spans 387 residues: NAD(P)H oxidoreductase RTN4IP1, mitochondrial (387 aa).

Residues 1–27 constitute a mitochondrion transit peptide; the sequence is MLMCRRWLVCSLRCHYRSFSFSAARRT. An Enoyl reductase (ER) domain is found at 38 to 379; that stretch reads GKNDVLRFTK…QGHARGKTVV (342 aa). 11 residues coordinate NADPH: S200, G202, V203, S223, Y241, L286, G327, F329, H372, A373, and R374.

It belongs to the zinc-containing alcohol dehydrogenase family. Quinone oxidoreductase subfamily.

The protein localises to the mitochondrion matrix. It is found in the mitochondrion outer membrane. It carries out the reaction a 3-demethylubiquinone + NADH + 2 H(+) = a 3-demethylubiquinol + NAD(+). It catalyses the reaction a 3-demethylubiquinone + NADPH + 2 H(+) = a 3-demethylubiquinol + NADP(+). The enzyme catalyses 3-demethylubiquinone-10 + NADH + 2 H(+) = 3-demethylubiquinol-10 + NAD(+). The catalysed reaction is 3-demethylubiquinone-10 + NADPH + 2 H(+) = 3-demethylubiquinol-10 + NADP(+). It functions in the pathway cofactor biosynthesis; ubiquinone biosynthesis. In terms of biological role, NAD(P)H oxidoreductase involved in the ubiquinone biosynthetic pathway. Required for the O-methyltransferase activity of COQ3. Able to catalyze the oxidoreduction of 3-demethylubiquinone into 3-demethylubiquinol in vitro. However, it is unclear if 3-demethylubiquinone constitutes a substrate in vivo. May also play a role in the regulation of retinal ganglion cell (RGC) neurite outgrowth, and hence in the development of the inner retina and optic nerve. This chain is NAD(P)H oxidoreductase RTN4IP1, mitochondrial (rtn4ip1), found in Danio rerio (Zebrafish).